The primary structure comprises 425 residues: Glucose-1-phosphate adenylyltransferase (425 aa).

Alpha-D-glucose 1-phosphate-binding positions include Y110, G175, E190–K191, and S208.

The protein belongs to the bacterial/plant glucose-1-phosphate adenylyltransferase family. As to quaternary structure, homotetramer.

It catalyses the reaction alpha-D-glucose 1-phosphate + ATP + H(+) = ADP-alpha-D-glucose + diphosphate. It participates in glycan biosynthesis; glycogen biosynthesis. In terms of biological role, involved in the biosynthesis of ADP-glucose, a building block required for the elongation reactions to produce glycogen. Catalyzes the reaction between ATP and alpha-D-glucose 1-phosphate (G1P) to produce pyrophosphate and ADP-Glc. This is Glucose-1-phosphate adenylyltransferase from Nitrosospira multiformis (strain ATCC 25196 / NCIMB 11849 / C 71).